The primary structure comprises 184 residues: uncharacterized protein (184 aa).

The first 23 residues, 1–23, serve as a signal peptide directing secretion; sequence MFCLLHLCFYLANFASSIKRTHA.

It is found in the secreted. This is an uncharacterized protein from Homo sapiens (Human).